We begin with the raw amino-acid sequence, 70 residues long: Small, acid-soluble spore protein 1 (70 aa).

This sequence belongs to the alpha/beta-type SASP family.

Functionally, SASP are bound to spore DNA. They are double-stranded DNA-binding proteins that cause DNA to change to an a-like conformation. They protect the DNA backbone from chemical and enzymatic cleavage and are thus involved in dormant spore's high resistance to UV light. The protein is Small, acid-soluble spore protein 1 of Bacillus subtilis.